The sequence spans 580 residues: MEGGIIHGGADESAFKECFSLTWKNPYVLRLAFSAGIGGLLFGYDTGVISGALLYIRDDFKSVDRNTWLQEMIVSMAVAGAIVGAAIGGWANDKLGRRSAILMADFLFLLGAIIMAAAPNPSLLVVGRVFVGLGVGMASMTAPLYISEASPAKIRGALVSTNGFLITGGQFLSYLINLAFTDVTGTWRWMLGIAGIPALLQFVLMFTLPESPRWLYRKGREEEAKAILRRIYSAEDVEQEIRALKDSVETEILEEGSSEKINMIKLCKAKTVRRGLIAGVGLQVFQQFVGINTVMYYSPTIVQLAGFASNRTALLLSLVTAGLNAFGSIISIYFIDRIGRKKLLIISLFGVIISLGILTGVFYEAATHAPAISSLETQRFNNISCPDYKSAMNTNAWDCMTCLKASSPSCGYCSSPIGKEHPGACWISDDSVKDLCHNENRLWYTRGCPSNFGWFALLGLGLYIIFFSPGMGTVPWIVNSEIYPLRFRGICGGIAATANWISNLIVAQSFLSLTEAIGTSWTFLIFGVISVIALLFVMVCVPETKGMPMEEIEKMLERRSMEFKFWKKKSKLVEKQNQSA.

A run of 12 helical transmembrane segments spans residues 36 to 56 (GIGG…LLYI), 71 to 91 (EMIV…GGWA), 106 to 126 (FLFL…LLVV), 129 to 149 (VFVG…ISEA), 156 to 176 (GALV…SYLI), 189 to 209 (WMLG…FTLP), 275 to 295 (GLIA…NTVM), 315 to 335 (LLSL…IYFI), 343 to 363 (LLII…GVFY), 452 to 472 (FGWF…PGMG), 490 to 510 (ICGG…AQSF), and 521 to 541 (WTFL…MVCV).

It belongs to the major facilitator superfamily. Sugar transporter (TC 2.A.1.1) family. As to expression, expressed in the tapetum, but not in pollen grains. Detected in leaf vascular tissue and in roots.

It localises to the cell membrane. Inhibited by nickel and to a lesser extent by cobalt. In terms of biological role, plasma membrane inositol-proton symporter. Specific for several inositol epimers, such as myoinositol and scylloinositol. D-chiroinositol, mucoinositol, alloinositol and pinitol are also transported with a lower activity. Not active with galactinol and phytate. In Arabidopsis thaliana (Mouse-ear cress), this protein is Probable inositol transporter 2 (INT2).